The following is a 330-amino-acid chain: DNA-directed RNA polymerase subunit alpha (330 aa).

Residues M1–R236 are alpha N-terminal domain (alpha-NTD). Positions F250–D330 are alpha C-terminal domain (alpha-CTD).

The protein belongs to the RNA polymerase alpha chain family. Homodimer. The RNAP catalytic core consists of 2 alpha, 1 beta, 1 beta' and 1 omega subunit. When a sigma factor is associated with the core the holoenzyme is formed, which can initiate transcription.

It catalyses the reaction RNA(n) + a ribonucleoside 5'-triphosphate = RNA(n+1) + diphosphate. DNA-dependent RNA polymerase catalyzes the transcription of DNA into RNA using the four ribonucleoside triphosphates as substrates. The protein is DNA-directed RNA polymerase subunit alpha of Vibrio campbellii (strain ATCC BAA-1116).